A 551-amino-acid polypeptide reads, in one-letter code: Glucose-6-phosphate isomerase (551 aa).

Glutamate 356 functions as the Proton donor in the catalytic mechanism. Active-site residues include histidine 387 and lysine 515.

It belongs to the GPI family.

Its subcellular location is the cytoplasm. It carries out the reaction alpha-D-glucose 6-phosphate = beta-D-fructose 6-phosphate. It functions in the pathway carbohydrate biosynthesis; gluconeogenesis. Its pathway is carbohydrate degradation; glycolysis; D-glyceraldehyde 3-phosphate and glycerone phosphate from D-glucose: step 2/4. Functionally, catalyzes the reversible isomerization of glucose-6-phosphate to fructose-6-phosphate. The polypeptide is Glucose-6-phosphate isomerase (Blochmanniella pennsylvanica (strain BPEN)).